Consider the following 87-residue polypeptide: UPF0250 protein plu1293 (87 aa).

It belongs to the UPF0250 family.

This chain is UPF0250 protein plu1293, found in Photorhabdus laumondii subsp. laumondii (strain DSM 15139 / CIP 105565 / TT01) (Photorhabdus luminescens subsp. laumondii).